A 286-amino-acid polypeptide reads, in one-letter code: Protein FAM87A (286 aa).

2 helical membrane-spanning segments follow: residues 68 to 88 (YLHS…ETAL) and 161 to 181 (SFFV…GDML).

This sequence belongs to the FAM87 family.

It localises to the membrane. This is Protein FAM87A (FAM87A) from Homo sapiens (Human).